The following is a 126-amino-acid chain: Aspartate 1-decarboxylase (126 aa).

Catalysis depends on serine 25, which acts as the Schiff-base intermediate with substrate; via pyruvic acid. Serine 25 bears the Pyruvic acid (Ser) mark. Substrate is bound at residue threonine 57. Tyrosine 58 (proton donor) is an active-site residue. 73 to 75 lines the substrate pocket; it reads GAA.

It belongs to the PanD family. In terms of assembly, heterooctamer of four alpha and four beta subunits. Pyruvate serves as cofactor. Post-translationally, is synthesized initially as an inactive proenzyme, which is activated by self-cleavage at a specific serine bond to produce a beta-subunit with a hydroxyl group at its C-terminus and an alpha-subunit with a pyruvoyl group at its N-terminus.

Its subcellular location is the cytoplasm. It carries out the reaction L-aspartate + H(+) = beta-alanine + CO2. It functions in the pathway cofactor biosynthesis; (R)-pantothenate biosynthesis; beta-alanine from L-aspartate: step 1/1. In terms of biological role, catalyzes the pyruvoyl-dependent decarboxylation of aspartate to produce beta-alanine. This is Aspartate 1-decarboxylase from Azotobacter vinelandii (strain DJ / ATCC BAA-1303).